The primary structure comprises 68 residues: MSKLGALLTICLLLFSLTAVPLDGDQHADQPAQRLQDRIPTEDHPLFDPNKRCCPPVACNMGCKPCCG.

Residues 1–19 form the signal peptide; it reads MSKLGALLTICLLLFSLTA. Positions 20-52 are excised as a propeptide; the sequence is VPLDGDQHADQPAQRLQDRIPTEDHPLFDPNKR. Disulfide bonds link Cys-53/Cys-67, Cys-54/Cys-63, and Cys-59/Cys-66. At Met-61 the chain carries Methionine sulfoxide; partial. Cys-67 carries the post-translational modification Cysteine amide.

In terms of tissue distribution, expressed by the venom duct.

The protein resides in the secreted. In terms of biological role, intracranial injection into mice causes scratching, hyperactivity and circular motion. This chain is Conotoxin tx3b, found in Conus textile (Cloth-of-gold cone).